A 476-amino-acid polypeptide reads, in one-letter code: Zinc metalloproteinase/disintegrin (476 aa).

Residues 1 to 20 (MIQVLLVTICLAAFPYQGSS) form the signal peptide. A propeptide spanning residues 21–192 (IILESGNVND…ASQSNLTPEQ (172 aa)) is cleaved from the precursor. Q193 carries the post-translational modification Pyrrolidone carboxylic acid. The Peptidase M12B domain maps to 198–393 (RYIELAVVAD…HNPQCILNKP (196 aa)). Ca(2+)-binding residues include E201 and D285. Intrachain disulfides connect C309-C388, C348-C372, and C350-C355. H334 is a binding site for Zn(2+). Residue E335 is part of the active site. The Zn(2+) site is built by H338 and H344. The Ca(2+) site is built by C388 and N391. Residues 394-403 (LTTVSGNELL) constitute a propeptide that is removed on maturation. Positions 395-476 (TTVSGNELLE…ADCPRNRFHA (82 aa)) constitute a Disintegrin domain. 6 disulfide bridges follow: C409/C424, C411/C419, C418/C441, C432/C438, C437/C462, and C450/C469. The short motif at 454–456 (RGD) is the Cell attachment site element.

It belongs to the venom metalloproteinase (M12B) family. P-II subfamily. P-IIa sub-subfamily. In terms of assembly, monomer (metalloprotease). Zn(2+) is required as a cofactor. In terms of processing, the N-terminus is blocked. Not glycosylated. As to expression, expressed by the venom gland.

Its subcellular location is the secreted. With respect to regulation, inhibited by EDTA, and 1,10-phenanthroline, but not by PMSF. Its function is as follows. Non-hemorrhagic proteinase that activates prothrombin (F2) calcium-independently. Activates factor X (F10) and hydrolyzes the Aalpha-chain and more slowly the Bbeta-chain of fibrin and fibrinogen without affecting the gamma chain. It induces neither detachment nor apoptosis of human endothelial cells and is also not able to trigger an endothelial pro-inflammatory cell response. Nitric oxide and prostacyclin levels released by endothelial cells are significantly increased after treatment with insularinase A. Functionally, inhibits ADP-induced platelet aggregation (IC(50)=0.8 uM for native protein). Interestingly, inhibits the adhesion of HUVECs to immobilized fibrinogen at very low concentrations (IC(50)=36 nM). This Bothrops insularis (Golden lancehead) protein is Zinc metalloproteinase/disintegrin.